The following is a 364-amino-acid chain: Fructose-1,6-bisphosphatase class 1 1 (364 aa).

Residues glutamate 99, aspartate 121, leucine 123, and aspartate 124 each contribute to the Mg(2+) site. Substrate-binding positions include aspartate 124–serine 127 and asparagine 220. Glutamate 292 is a Mg(2+) binding site.

The protein belongs to the FBPase class 1 family. As to quaternary structure, homotetramer. It depends on Mg(2+) as a cofactor.

It localises to the cytoplasm. It catalyses the reaction beta-D-fructose 1,6-bisphosphate + H2O = beta-D-fructose 6-phosphate + phosphate. It functions in the pathway carbohydrate biosynthesis; gluconeogenesis. This Albidiferax ferrireducens (strain ATCC BAA-621 / DSM 15236 / T118) (Rhodoferax ferrireducens) protein is Fructose-1,6-bisphosphatase class 1 1.